The primary structure comprises 192 residues: Ion-translocating oxidoreductase complex subunit A (192 aa).

6 consecutive transmembrane segments (helical) span residues V5 to L25, I39 to V59, L67 to F87, L102 to L122, I134 to M154, and S171 to V191.

It belongs to the NqrDE/RnfAE family. The complex is composed of six subunits: RnfA, RnfB, RnfC, RnfD, RnfE and RnfG.

It is found in the cell inner membrane. Part of a membrane-bound complex that couples electron transfer with translocation of ions across the membrane. In Vibrio parahaemolyticus serotype O3:K6 (strain RIMD 2210633), this protein is Ion-translocating oxidoreductase complex subunit A.